The chain runs to 338 residues: NADPH dehydrogenase (338 aa).

22–25 (SPMC) provides a ligand contact to FMN. Tyr27 contacts substrate. Positions 59 and 101 each coordinate FMN. 163–166 (HAAH) provides a ligand contact to substrate. FMN-binding positions include Arg214 and 306 to 307 (GR).

Belongs to the NADH:flavin oxidoreductase/NADH oxidase family. NamA subfamily. As to quaternary structure, homotetramer. The cofactor is FMN.

The enzyme catalyses A + NADPH + H(+) = AH2 + NADP(+). Its function is as follows. Catalyzes the reduction of the double bond of an array of alpha,beta-unsaturated aldehydes and ketones. It also reduces the nitro group of nitroester and nitroaromatic compounds. It could have a role in detoxification processes. This is NADPH dehydrogenase from Listeria innocua serovar 6a (strain ATCC BAA-680 / CLIP 11262).